The chain runs to 350 residues: MSQSAVSFQINPVSKVQEQSIQQKINLKTKPLGALGQLESLALQIARIQGADQPYIANPTMLVFAGDHGIAAEGVSIAPSEVTRQMVQNFAHGGAAINVFCRQVGFKLEVIDCGILTPIEGVKGIIDQRLGAGTGAIHLEPAMALETVDKGFAMARDLIERHHQTGCNLVAFGEMGIGNTSAASAIMAAIMQLDVIDCVGRGTGINQETLARKLMLIELALLLHQSALTGPKEVLACLGGFEIVQMTGAMLAAAERNMLVVVDGFIATAAALVAVTIAPNVRDYLIFAHQSEEQGHLRMLEFLQAKPLLSLGLRLGEGTGAALALPLIQAAVNFYNQMASFSDAGIEAVV.

Catalysis depends on Glu317, which acts as the Proton acceptor.

The protein belongs to the CobT family.

It catalyses the reaction 5,6-dimethylbenzimidazole + nicotinate beta-D-ribonucleotide = alpha-ribazole 5'-phosphate + nicotinate + H(+). It functions in the pathway nucleoside biosynthesis; alpha-ribazole biosynthesis; alpha-ribazole from 5,6-dimethylbenzimidazole: step 1/2. Catalyzes the synthesis of alpha-ribazole-5'-phosphate from nicotinate mononucleotide (NAMN) and 5,6-dimethylbenzimidazole (DMB). This chain is Nicotinate-nucleotide--dimethylbenzimidazole phosphoribosyltransferase, found in Shewanella sp. (strain W3-18-1).